Here is a 479-residue protein sequence, read N- to C-terminus: BURP domain-containing protein 4 (479 aa).

Residues 1-46 (MVGKGNECAAARRRFSLRAAAASSSSSSFLPCLLLAAALSAGCCRA) form the signal peptide. The segment at 158-177 (RADGPPKQPATFPASPNGEK) is disordered. One can recognise a BURP domain in the interval 254-479 (LFLMKKLHPG…PQGYVLWLAN (226 aa)). A glycan (N-linked (GlcNAc...) asparagine) is linked at Asn445.

Expressed in stamen.

This Oryza sativa subsp. japonica (Rice) protein is BURP domain-containing protein 4 (BURP4).